Consider the following 143-residue polypeptide: FAD synthase (143 aa).

ATP-binding positions include 10 to 11 (TF), 15 to 18 (HPGH), and D93.

The protein belongs to the archaeal FAD synthase family. As to quaternary structure, homodimer. The cofactor is a divalent metal cation.

The enzyme catalyses FMN + ATP + H(+) = FAD + diphosphate. The protein operates within cofactor biosynthesis; FAD biosynthesis; FAD from FMN: step 1/1. In terms of biological role, catalyzes the transfer of the AMP portion of ATP to flavin mononucleotide (FMN) to produce flavin adenine dinucleotide (FAD) coenzyme. The polypeptide is FAD synthase (Haloterrigena turkmenica (strain ATCC 51198 / DSM 5511 / JCM 9101 / NCIMB 13204 / VKM B-1734 / 4k) (Halococcus turkmenicus)).